Reading from the N-terminus, the 330-residue chain is Alpha-1,6-glucosyltransferase (330 aa).

This sequence belongs to the glycosyltransferase group 1 family. Requires Does not require a metal cofactor. as cofactor.

The protein localises to the cytoplasm. Its pathway is protein modification; protein glycosylation. Its function is as follows. Catalyzes the transfer of a glucose moiety from UDP-glucose to another glucose that is N-linked to an asparagine within a peptide or protein. Can act in a repetitive manner, and this way it elongates the N-linked glucose by a glycan chain consisting of several alpha-1-&gt;6 linked glucose residues. Is able to add up to six glucose units in vitro. Cannot use UDP-Gal, UDP-GlcNAc or UDP-GalNAc as a substrate donor. In Actinobacillus pleuropneumoniae serotype 7 (strain AP76), this protein is Alpha-1,6-glucosyltransferase.